Consider the following 492-residue polypeptide: uncharacterized protein (492 aa).

Residues 1-22 (MIRPNMFALLMLVVLAITSVNA) form the signal peptide. Residues Asn-92, Asn-97, Asn-119, Asn-146, Asn-213, Asn-267, and Asn-458 are each glycosylated (N-linked (GlcNAc...) asparagine; by host).

It is found in the secreted. This is an uncharacterized protein from Acanthamoeba polyphaga (Amoeba).